Reading from the N-terminus, the 180-residue chain is Inosine/xanthosine triphosphatase (180 aa).

8 to 13 (TTNPAK) lines the substrate pocket. 2 residues coordinate Mg(2+): Asp-38 and Glu-68. Residue 68 to 69 (EA) participates in substrate binding.

The protein belongs to the YjjX NTPase family. In terms of assembly, homodimer. Mg(2+) is required as a cofactor. Mn(2+) serves as cofactor.

The catalysed reaction is XTP + H2O = XDP + phosphate + H(+). The enzyme catalyses ITP + H2O = IDP + phosphate + H(+). Phosphatase that hydrolyzes non-canonical purine nucleotides such as XTP and ITP to their respective diphosphate derivatives. Probably excludes non-canonical purines from DNA/RNA precursor pool, thus preventing their incorporation into DNA/RNA and avoiding chromosomal lesions. The protein is Inosine/xanthosine triphosphatase of Yersinia pseudotuberculosis serotype IB (strain PB1/+).